A 161-amino-acid chain; its full sequence is 3-isopropylmalate dehydratase small subunit 1 (161 aa).

Belongs to the LeuD family. LeuD type 2 subfamily. As to quaternary structure, heterodimer of LeuC and LeuD.

It catalyses the reaction (2R,3S)-3-isopropylmalate = (2S)-2-isopropylmalate. It functions in the pathway amino-acid biosynthesis; L-leucine biosynthesis; L-leucine from 3-methyl-2-oxobutanoate: step 2/4. Functionally, catalyzes the isomerization between 2-isopropylmalate and 3-isopropylmalate, via the formation of 2-isopropylmaleate. The protein is 3-isopropylmalate dehydratase small subunit 1 (leuD1) of Archaeoglobus fulgidus (strain ATCC 49558 / DSM 4304 / JCM 9628 / NBRC 100126 / VC-16).